A 153-amino-acid polypeptide reads, in one-letter code: Protein Smg homolog (153 aa).

Belongs to the Smg family.

This chain is Protein Smg homolog, found in Neisseria gonorrhoeae (strain ATCC 700825 / FA 1090).